Reading from the N-terminus, the 663-residue chain is DNA ligase (663 aa).

Residues 33 to 37, 82 to 83, and Glu113 contribute to the NAD(+) site; these read DQEFD and SL. Catalysis depends on Lys115, which acts as the N6-AMP-lysine intermediate. The NAD(+) site is built by Arg136, Glu170, Lys286, and Lys310. 4 residues coordinate Zn(2+): Cys404, Cys407, Cys422, and Cys427. The 77-residue stretch at 587–663 folds into the BRCT domain; that stretch reads SSDPSLTGKL…IEESDLEDFL (77 aa).

It belongs to the NAD-dependent DNA ligase family. LigA subfamily. Mg(2+) serves as cofactor. It depends on Mn(2+) as a cofactor.

It catalyses the reaction NAD(+) + (deoxyribonucleotide)n-3'-hydroxyl + 5'-phospho-(deoxyribonucleotide)m = (deoxyribonucleotide)n+m + AMP + beta-nicotinamide D-nucleotide.. Functionally, DNA ligase that catalyzes the formation of phosphodiester linkages between 5'-phosphoryl and 3'-hydroxyl groups in double-stranded DNA using NAD as a coenzyme and as the energy source for the reaction. It is essential for DNA replication and repair of damaged DNA. The protein is DNA ligase of Natranaerobius thermophilus (strain ATCC BAA-1301 / DSM 18059 / JW/NM-WN-LF).